Consider the following 208-residue polypeptide: Inosine triphosphate pyrophosphatase (208 aa).

Ala-2 bears the N-acetylalanine mark. Residue 14-19 coordinates ITP; it reads TGNAKK. Glu-44 is a binding site for Mg(2+). ITP is bound by residues Lys-56, 72 to 73, Lys-89, 149 to 152, Lys-172, and 177 to 178; these read DT, FGWD, and HR.

Belongs to the HAM1 NTPase family. Homodimer. Requires Mg(2+) as cofactor. Mn(2+) is required as a cofactor.

The protein localises to the cytoplasm. The enzyme catalyses ITP + H2O = IMP + diphosphate + H(+). It catalyses the reaction dITP + H2O = dIMP + diphosphate + H(+). The catalysed reaction is XTP + H2O = XMP + diphosphate + H(+). It carries out the reaction N(6)-hydroxy-dATP + H2O = N(6)-hydroxy-dAMP + diphosphate + H(+). In terms of biological role, pyrophosphatase that hydrolyzes the non-canonical purine nucleotides inosine triphosphate (ITP), deoxyinosine triphosphate (dITP) as well as 2'-deoxy-N-6-hydroxylaminopurine triphosphate (dHAPTP) and xanthosine 5'-triphosphate (XTP) to their respective monophosphate derivatives. The enzyme does not distinguish between the deoxy- and ribose forms. Probably excludes non-canonical purines from RNA and DNA precursor pools, thus preventing their incorporation into RNA and DNA and avoiding chromosomal lesions. This is Inosine triphosphate pyrophosphatase from Bos taurus (Bovine).